Consider the following 665-residue polypeptide: RNA-directed RNA polymerase (665 aa).

Positions N310–P485 constitute a RdRp catalytic domain. 3 residues coordinate Mg(2+): D454, Y491, and G495.

In terms of assembly, part of the packaging complex composed of RDRP, P4 and P7. Interacts with P7. Mg(2+) is required as a cofactor. Requires Mn(2+) as cofactor.

The protein localises to the virion. It catalyses the reaction RNA(n) + a ribonucleoside 5'-triphosphate = RNA(n+1) + diphosphate. In terms of biological role, rna-dependent RNA polymerase part of the packaging complex that packages the viral RNA segments, replicate them into a double-stranded form and transcribe them. This is RNA-directed RNA polymerase (P2) from Pseudomonas phage phi6 (Bacteriophage phi-6).